Here is a 429-residue protein sequence, read N- to C-terminus: Ribosomal RNA small subunit methyltransferase B (429 aa).

S-adenosyl-L-methionine-binding positions include 254 to 260, aspartate 277, aspartate 303, and aspartate 322; that span reads CAAPGGK. The active-site Nucleophile is cysteine 375.

Belongs to the class I-like SAM-binding methyltransferase superfamily. RsmB/NOP family.

Its subcellular location is the cytoplasm. The catalysed reaction is cytidine(967) in 16S rRNA + S-adenosyl-L-methionine = 5-methylcytidine(967) in 16S rRNA + S-adenosyl-L-homocysteine + H(+). In terms of biological role, specifically methylates the cytosine at position 967 (m5C967) of 16S rRNA. The sequence is that of Ribosomal RNA small subunit methyltransferase B from Pectobacterium carotovorum subsp. carotovorum (strain PC1).